Reading from the N-terminus, the 378-residue chain is Leukosialin (378 aa).

The first 7 residues, 1–7, serve as a signal peptide directing secretion; the sequence is WAQVVSQ. Over 8–231 the chain is Extracellular; that stretch reads ENLPNTMTML…TVPPRPGSSG (224 aa). Thr13, Thr15, and Thr20 each carry an O-linked (GalNAc...) threonine glycan. Residues 13–33 form a disordered region; that stretch reads TMTMLPFTPNSESPSTSEALS. Ser23, Ser25, and Ser27 each carry an O-linked (GalNAc...) serine glycan. Thr28 carries O-linked (GalNAc...) threonine glycosylation. 2 O-linked (GalNAc...) serine glycosylation sites follow: Ser29 and Ser33. O-linked (GalNAc...) threonine glycosylation occurs at Thr34. O-linked (GalNAc...) serine glycans are attached at residues Ser36 and Ser37. O-linked (GalNAc...) threonine glycosylation occurs at Thr40. Ser108 and Ser113 each carry an O-linked (GalNAc...) serine glycan. Thr118, Thr120, and Thr124 each carry an O-linked (GalNAc...) threonine glycan. 2 O-linked (GalNAc...) serine glycosylation sites follow: Ser125 and Ser126. O-linked (GalNAc...) threonine glycosylation occurs at Thr174. O-linked (GalNAc...) serine glycans are attached at residues Ser176 and Ser180. A glycan (O-linked (GalNAc...) threonine) is linked at Thr183. Ser187 is a glycosylation site (O-linked (GalNAc...) serine). Thr189 is a glycosylation site (O-linked (GalNAc...) threonine). The helical transmembrane segment at 232 to 254 threads the bilayer; the sequence is MLLVSMLIALTVVLVLVALLLLW. Residues 255–285 are required for interaction with EZR, MSN and RDX and for co-localization to microvilli; the sequence is RQRQKRRTGALTLSRGGKRNGTVDAWAGPAR. Over 255-378 the chain is Cytoplasmic; sequence RQRQKRRTGA…AKDGAAPQSL (124 aa). Residues 259-273 carry the Nuclear localization signal motif; the sequence is KRRTGALTLSRGGKR. A disordered region spans residues 265 to 378; sequence LTLSRGGKRN…AKDGAAPQSL (114 aa). Ser268 is subject to Phosphoserine. Thr276 carries the phosphothreonine modification. A compositionally biased stretch (polar residues) spans 310–321; sequence GSGQRPTLTTFF. Ser311 carries the phosphoserine modification. At Thr316 the chain carries Phosphothreonine. Phosphoserine occurs at positions 322 and 326. Ser330 is modified (phosphoserine; by PKC/PRKCQ). Phosphoserine is present on Ser354. Phosphothreonine is present on Thr361.

As to quaternary structure, interacts with SIGLEC1. Monomer. Interacts with CTNNB1. Interacts with EZR, MSN and RDX (via FERM domain). Has a high content of sialic acid and O-linked carbohydrate structures. In terms of processing, phosphorylation at Ser-330 is regulated by chemokines, requires its association with ERM proteins (EZR, RDX and MSN) and is essential for its function in the regulation of T-cell trafficking to lymph nodes. Post-translationally, cleavage by CTSG releases its extracellular domain and triggers its intramembrane proteolysis by gamma-secretase releasing the CD43 cytoplasmic tail chain (CD43-ct) which translocates to the nucleus. Sumoylated. In terms of tissue distribution, cell surface of thymocytes, T-lymphocytes, neutrophils, plasma cells and myelomas.

The protein localises to the membrane. Its subcellular location is the cell projection. It localises to the microvillus. The protein resides in the uropodium. It is found in the nucleus. The protein localises to the PML body. Its function is as follows. Predominant cell surface sialoprotein of leukocytes which regulates multiple T-cell functions, including T-cell activation, proliferation, differentiation, trafficking and migration. Positively regulates T-cell trafficking to lymph-nodes via its association with ERM proteins (EZR, RDX and MSN). Negatively regulates Th2 cell differentiation and predisposes the differentiation of T-cells towards a Th1 lineage commitment. Promotes the expression of IFN-gamma by T-cells during T-cell receptor (TCR) activation of naive cells and induces the expression of IFN-gamma by CD4(+) T-cells and to a lesser extent by CD8(+) T-cells. Plays a role in preparing T-cells for cytokine sensing and differentiation into effector cells by inducing the expression of cytokine receptors IFNGR and IL4R, promoting IFNGR and IL4R signaling and by mediating the clustering of IFNGR with TCR. Acts as a major E-selectin ligand responsible for Th17 cell rolling on activated vasculature and recruitment during inflammation. Mediates Th17 cells, but not Th1 cells, adhesion to E-selectin. Acts as a T-cell counter-receptor for SIGLEC1. In terms of biological role, protects cells from apoptotic signals, promoting cell survival. The protein is Leukosialin (Spn) of Rattus norvegicus (Rat).